The chain runs to 362 residues: Major capsid protein VP1 (362 aa).

Positions 1 to 21 (MAPTKRKGSCPGAAPKKPKEP) are disordered. The short motif at 5 to 19 (KRKGSCPGAAPKKPK) is the Bipartite nuclear localization signal element. Positions 302–362 (ISFLLSDLIN…EFGQTTTRMQ (61 aa)) are C-terminal arm. T338 carries the phosphothreonine; by host modification.

It belongs to the polyomaviruses coat protein VP1 family. As to quaternary structure, homomultimer; disulfide-linked. The virus capsid is composed of 72 icosahedral units, each one composed of five disulfide-linked copies of VP1. Interacts with agnoprotein. Interacts with minor capsid proteins VP2 and VP3. Interacts with host HSPA8; this interaction probably participates in virus assembly. Interacts with host SP1; this interaction enhances the efficiency of viral packaging.

Its subcellular location is the virion. It is found in the host nucleus. It localises to the host endoplasmic reticulum. Forms an icosahedral capsid with a T=7 symmetry and a 40 nm diameter. The capsid is composed of 72 pentamers linked to each other by disulfide bonds and associated with VP2 or VP3 proteins. Binds to N-glycolylneuraminic analog of the ganglioside GM1 on the cell surface to provide virion attachment to target cell. Once attached, the virion is internalized by caveolin-mediated endocytosis and traffics to the endoplasmic reticulum. Inside the endoplasmic reticulum, the protein folding machinery isomerizes VP1 interpentamer disulfide bonds, thereby triggering initial uncoating. Next, the virion uses the endoplasmic reticulum-associated degradation machinery to probably translocate in the cytosol before reaching the nucleus. Nuclear entry of the viral DNA involves the selective exposure and importin recognition of VP2/Vp3 nuclear localization signal. The assembly takes place in the cell nucleus. Encapsulates the genomic DNA and participates in rearranging nucleosomes around the viral DNA. The viral progenies exit the cells by lytic release. This chain is Major capsid protein VP1, found in Macaca (macaques).